We begin with the raw amino-acid sequence, 149 residues long: Inner membrane protein YfeZ (149 aa).

The Cytoplasmic portion of the chain corresponds to 1–18; the sequence is MKSTEFHPVHYDAHGRLR. Residues 19–39 traverse the membrane as a helical segment; it reads LPLLFWLVLLLQARTWVLFVI. Over 40–58 the chain is Periplasmic; the sequence is AGASREQGTALLNLFYPDH. Residues 59-79 traverse the membrane as a helical segment; it reads DNFWLGLIPGIPAVLAFLLSG. Residues 80 to 89 are Cytoplasmic-facing; sequence RRATFPRTWR. The helical transmembrane segment at 90–110 threads the bilayer; the sequence is VLYFLLLLAQVVLLCWQPWLW. Residues 111 to 115 lie on the Periplasmic side of the membrane; the sequence is LNGES. A helical membrane pass occupies residues 116–136; sequence VSGIGLALVVADIVALIWLLT. The Cytoplasmic portion of the chain corresponds to 137–149; the sequence is NRRLRACFYEVKE.

It is found in the cell inner membrane. The sequence is that of Inner membrane protein YfeZ (yfeZ) from Escherichia coli (strain K12).